The following is a 472-amino-acid chain: Acetyl-CoA decarbonylase/synthase complex subunit beta 2 (472 aa).

[Ni-Fe-S] cluster-binding residues include Cys-189, Cys-192, Cys-278, and Cys-280.

It belongs to the CdhC family. As to quaternary structure, monomer. The ACDS complex is made up of alpha, epsilon, beta, gamma and delta chains with a probable stoichiometry of (alpha(2)epsilon(2))(4)-beta(8)-(gamma(1)delta(1))(8) (Potential). The cofactor is [Ni-Fe-S] cluster.

The enzyme catalyses Co(I)-[corrinoid Fe-S protein] + acetyl-CoA + H(+) = methyl-Co(III)-[corrinoid Fe-S protein] + CO + CoA. It participates in one-carbon metabolism; methanogenesis from acetate. Its function is as follows. Part of a complex that catalyzes the reversible cleavage of acetyl-CoA, allowing growth on acetate as sole source of carbon and energy. The alpha-epsilon complex generates CO from CO(2), while the beta subunit (this protein) combines the CO with CoA and a methyl group to form acetyl-CoA. The methyl group, which is incorporated into acetyl-CoA, is transferred to the beta subunit by a corrinoid iron-sulfur protein (the gamma-delta complex). This Methanosarcina thermophila protein is Acetyl-CoA decarbonylase/synthase complex subunit beta 2 (cdhC2).